A 342-amino-acid polypeptide reads, in one-letter code: Protein-glutamate methylesterase/protein-glutamine glutaminase 3 (342 aa).

The Response regulatory domain maps to 3 to 120; the sequence is RVLVVEDMPT…SPGFADDARR (118 aa). The residue at position 54 (Asp54) is a 4-aspartylphosphate. The region spanning 152–342 is the CheB-type methylesterase domain; that stretch reads DVPRGRVVAV…ADRLALWLRR (191 aa). Residues Ser164, His191, and Asp285 contribute to the active site.

Belongs to the CheB family. Phosphorylated by CheA. Phosphorylation of the N-terminal regulatory domain activates the methylesterase activity.

It is found in the cytoplasm. It carries out the reaction [protein]-L-glutamate 5-O-methyl ester + H2O = L-glutamyl-[protein] + methanol + H(+). The catalysed reaction is L-glutaminyl-[protein] + H2O = L-glutamyl-[protein] + NH4(+). In terms of biological role, involved in chemotaxis. Part of a chemotaxis signal transduction system that modulates chemotaxis in response to various stimuli. Catalyzes the demethylation of specific methylglutamate residues introduced into the chemoreceptors (methyl-accepting chemotaxis proteins or MCP) by CheR. Also mediates the irreversible deamidation of specific glutamine residues to glutamic acid. The polypeptide is Protein-glutamate methylesterase/protein-glutamine glutaminase 3 (Anaeromyxobacter dehalogenans (strain 2CP-C)).